Consider the following 443-residue polypeptide: ATP-dependent protease ATPase subunit HslU (443 aa).

ATP is bound by residues Ile-18, 60 to 65 (GVGKTE), Asp-256, Glu-321, and Arg-393.

This sequence belongs to the ClpX chaperone family. HslU subfamily. A double ring-shaped homohexamer of HslV is capped on each side by a ring-shaped HslU homohexamer. The assembly of the HslU/HslV complex is dependent on binding of ATP.

Its subcellular location is the cytoplasm. Functionally, ATPase subunit of a proteasome-like degradation complex; this subunit has chaperone activity. The binding of ATP and its subsequent hydrolysis by HslU are essential for unfolding of protein substrates subsequently hydrolyzed by HslV. HslU recognizes the N-terminal part of its protein substrates and unfolds these before they are guided to HslV for hydrolysis. The chain is ATP-dependent protease ATPase subunit HslU from Vibrio cholerae serotype O1 (strain ATCC 39315 / El Tor Inaba N16961).